Consider the following 401-residue polypeptide: Formate dehydrogenase (401 aa).

The substrate site is built by I123 and N147. NAD(+)-binding positions include S148, 202-203 (RI), D222, 257-261 (PLHPE), T283, D309, 333-336 (HISG), and S381.

This sequence belongs to the D-isomer specific 2-hydroxyacid dehydrogenase family. FDH subfamily. Homodimer.

It is found in the cytoplasm. The catalysed reaction is formate + NAD(+) = CO2 + NADH. Its function is as follows. Catalyzes the NAD(+)-dependent oxidation of formate to carbon dioxide. Formate oxidation is the final step in the methanol oxidation pathway in methylotrophic microorganisms. Has a role in the detoxification of exogenous formate in non-methylotrophic organisms. The protein is Formate dehydrogenase of Pseudomonas sp. (strain 101) (Achromobacter parvulus T1).